The primary structure comprises 915 residues: Protein inturned (915 aa).

Positions 88–144 (NAKRQANSSNKSEAKLKKLTKILRRKRRPSQRKAEGKDSSQRPASILKNQAGQRPGV) are disordered. A compositionally biased stretch (basic residues) spans 104–118 (KKLTKILRRKRRPSQ). Positions 128–139 (QRPASILKNQAG) are enriched in polar residues. A PDZ domain is found at 165-253 (SVSSSSADRG…PMQVRLTLET (89 aa)). The tract at residues 688 to 738 (GIRGRRASPQRSQSDSGSEGHADGTPASVARRDSLGSGGSDGSLGSAGFLK) is disordered.

This sequence belongs to the inturned family.

The protein localises to the cytoplasm. Its subcellular location is the cell surface. It is found in the cytoskeleton. It localises to the cilium basal body. Functionally, plays a key role in ciliogenesis and embryonic development. Regulator of cilia formation by controlling the organization of the apical actin cytoskeleton and the positioning of the basal bodies at the apical cell surface, which in turn is essential for the normal orientation of elongating ciliary microtubules. Plays a key role in definition of cell polarity via its role in ciliogenesis but not via conversion extension. Has an indirect effect on hedgehog signaling. The polypeptide is Protein inturned (intu) (Danio rerio (Zebrafish)).